The primary structure comprises 211 residues: Phosphoheptose isomerase (211 aa).

Residues 50 to 211 (IAGTFEDGGK…VERMLGYCRL (162 aa)) form the SIS domain. 65–67 (NGG) contacts substrate. His74 and Glu78 together coordinate Zn(2+). Substrate is bound by residues Glu78, 109–110 (ND), 135–137 (STS), Ser140, and Gln188. 2 residues coordinate Zn(2+): Gln188 and His196.

It belongs to the SIS family. GmhA subfamily. It depends on Zn(2+) as a cofactor.

Its subcellular location is the cytoplasm. The catalysed reaction is 2 D-sedoheptulose 7-phosphate = D-glycero-alpha-D-manno-heptose 7-phosphate + D-glycero-beta-D-manno-heptose 7-phosphate. The protein operates within carbohydrate biosynthesis; D-glycero-D-manno-heptose 7-phosphate biosynthesis; D-glycero-alpha-D-manno-heptose 7-phosphate and D-glycero-beta-D-manno-heptose 7-phosphate from sedoheptulose 7-phosphate: step 1/1. Functionally, catalyzes the isomerization of sedoheptulose 7-phosphate in D-glycero-D-manno-heptose 7-phosphate. The protein is Phosphoheptose isomerase of Pelodictyon phaeoclathratiforme (strain DSM 5477 / BU-1).